The sequence spans 209 residues: Redox-sensing transcriptional repressor Rex (209 aa).

The segment at residues 16 to 55 (LYYRFIQNLSLSGKQRVSSAELSEAVKVDSATIRRDFSYF) is a DNA-binding region (H-T-H motif). Residue 90 to 95 (GVGNLG) participates in NAD(+) binding.

The protein belongs to the transcriptional regulatory Rex family. As to quaternary structure, homodimer.

Its subcellular location is the cytoplasm. Its function is as follows. Modulates transcription in response to changes in cellular NADH/NAD(+) redox state. The chain is Redox-sensing transcriptional repressor Rex from Bacillus cytotoxicus (strain DSM 22905 / CIP 110041 / 391-98 / NVH 391-98).